The chain runs to 679 residues: Protein FAM178B (679 aa).

Positions 70–113 (PLDQGPRCPARRPCSPASAPAPTSPKKPKIQAPGETFPTDWSPP) are disordered. Over residues 75–90 (PRCPARRPCSPASAPA) the composition is skewed to low complexity.

This sequence belongs to the FAM178 family.

The protein is Protein FAM178B of Homo sapiens (Human).